Here is a 138-residue protein sequence, read N- to C-terminus: Putative pre-16S rRNA nuclease (138 aa).

Belongs to the YqgF nuclease family.

It localises to the cytoplasm. In terms of biological role, could be a nuclease involved in processing of the 5'-end of pre-16S rRNA. This is Putative pre-16S rRNA nuclease from Escherichia coli O7:K1 (strain IAI39 / ExPEC).